Reading from the N-terminus, the 344-residue chain is 4'-phosphopantetheinyl transferase NpgA (344 aa).

The protein belongs to the P-Pant transferase superfamily.

The catalysed reaction is apo-[ACP] + CoA = holo-[ACP] + adenosine 3',5'-bisphosphate + H(+). Transfers the 4'-phosphopantetheine moiety from coenzyme A to a Ser of an acyl-carrier-protein. The enzyme is able to transfer the cofactor to a broad range of enzymes with acyl- or peptidyl-carrier protein domains. Required for primary biological processes such as growth and asexual/sexual development, and activates target enzymes involved in the synthesis of metabolites such as fatty acids, polyketides and nonribosomal peptides, lysine, siderophore, penicillin, sterigmatocystin, shamixantone, dehydroaustinol, and pigments. This is 4'-phosphopantetheinyl transferase NpgA (npgA) from Emericella nidulans (strain FGSC A4 / ATCC 38163 / CBS 112.46 / NRRL 194 / M139) (Aspergillus nidulans).